A 563-amino-acid polypeptide reads, in one-letter code: Protein NRT1/ PTR FAMILY 5.9 (563 aa).

A helical membrane pass occupies residues 56–76 (TWAGFTSMLPLFSAPLADTYW). A Phosphothreonine modification is found at T81. 10 helical membrane-spanning segments follow: residues 82–102 (ILASSSVYFVGLVGLTWTAFA), 110–130 (TISSYFLYSSLCLVSIGLGVL), 168–188 (FFQLWYFGVCTGSLMGVTVMA), 194–214 (FGWVLGFAIPGIVIFLSILVF), 317–337 (FPIWMMLLMFAVIFQLPATFF), 362–382 (TITLSIILLMPLYDKILIPIT), 394–414 (VMERMGVGMFLSIIAIVIAAI), 441–461 (IFWLLPQYILLGISDIFTVVG), 479–499 (FALYTSVFGVGSFVSAALISI), and 528–548 (WLLALTSTISFVVYIFLCKFF).

This sequence belongs to the major facilitator superfamily. Proton-dependent oligopeptide transporter (POT/PTR) (TC 2.A.17) family. In terms of tissue distribution, expressed in roots and flowers.

The protein resides in the membrane. The sequence is that of Protein NRT1/ PTR FAMILY 5.9 (NPF5.9) from Arabidopsis thaliana (Mouse-ear cress).